A 165-amino-acid polypeptide reads, in one-letter code: MKCPYCGQLNNRVVDSRLSRSEFAVRRRRECLDCMRRFTTYEKVEDLPVMVVKKDGRREEFNRDKILSGIKKACEKRAISVDQIEEVVDSVERDFRDANEKEISSTVVGNKVMELLHRLDDVAYVRFASVYREFKDVDDFIEELKSLIPRKILEDKKPDGCSDDG.

A zinc finger spans residues 3–34 (CPYCGQLNNRVVDSRLSRSEFAVRRRRECLDC). In terms of domain architecture, ATP-cone spans 49–139 (VMVVKKDGRR…VYREFKDVDD (91 aa)).

Belongs to the NrdR family. Zn(2+) serves as cofactor.

Negatively regulates transcription of bacterial ribonucleotide reductase nrd genes and operons by binding to NrdR-boxes. This Desulforapulum autotrophicum (strain ATCC 43914 / DSM 3382 / VKM B-1955 / HRM2) (Desulfobacterium autotrophicum) protein is Transcriptional repressor NrdR.